The sequence spans 196 residues: DnaA initiator-associating protein DiaA (196 aa).

The SIS domain occupies 34–196 (LVQSLLNGNK…DNTLFPHQDD (163 aa)).

This sequence belongs to the SIS family. DiaA subfamily. As to quaternary structure, homotetramer; dimer of dimers.

In terms of biological role, required for the timely initiation of chromosomal replication via direct interactions with the DnaA initiator protein. The protein is DnaA initiator-associating protein DiaA of Shigella boydii serotype 18 (strain CDC 3083-94 / BS512).